A 210-amino-acid polypeptide reads, in one-letter code: Meiotic coiled-coil protein 7 (210 aa).

The stretch at 77 to 148 (KRSRESVLGS…LKTQLSNLNH (72 aa)) forms a coiled coil.

The protein belongs to the MND1 family. As to quaternary structure, interacts with meu13.

It localises to the cytoplasm. The protein localises to the nucleus. Its function is as follows. Required for meiotic recombination. The sequence is that of Meiotic coiled-coil protein 7 (mcp7) from Schizosaccharomyces pombe (strain 972 / ATCC 24843) (Fission yeast).